A 327-amino-acid polypeptide reads, in one-letter code: GMP reductase (327 aa).

Residue cysteine 176 is the Thioimidate intermediate of the active site. 205–228 (IIADGGIRTHGDIAKSIRFGASMV) contacts NADP(+).

Belongs to the IMPDH/GMPR family. GuaC type 2 subfamily.

It carries out the reaction IMP + NH4(+) + NADP(+) = GMP + NADPH + 2 H(+). In terms of biological role, catalyzes the irreversible NADPH-dependent deamination of GMP to IMP. It functions in the conversion of nucleobase, nucleoside and nucleotide derivatives of G to A nucleotides, and in maintaining the intracellular balance of A and G nucleotides. The polypeptide is GMP reductase (Streptococcus suis (strain 05ZYH33)).